The primary structure comprises 324 residues: Acetyl-coenzyme A carboxylase carboxyl transferase subunit alpha (324 aa).

The CoA carboxyltransferase C-terminal domain occupies 44 to 298; it reads RFQDKLTKLQ…RKELIKQLNI (255 aa).

This sequence belongs to the AccA family. In terms of assembly, acetyl-CoA carboxylase is a heterohexamer composed of biotin carboxyl carrier protein (accB), biotin carboxylase (accC) and two subunits each of ACCase subunit alpha (accA) and ACCase subunit beta (accD).

It is found in the plastid. Its subcellular location is the chloroplast. The catalysed reaction is N(6)-carboxybiotinyl-L-lysyl-[protein] + acetyl-CoA = N(6)-biotinyl-L-lysyl-[protein] + malonyl-CoA. The protein operates within lipid metabolism; malonyl-CoA biosynthesis; malonyl-CoA from acetyl-CoA: step 1/1. In terms of biological role, component of the acetyl coenzyme A carboxylase (ACC) complex. First, biotin carboxylase catalyzes the carboxylation of biotin on its carrier protein (BCCP) and then the CO(2) group is transferred by the carboxyltransferase to acetyl-CoA to form malonyl-CoA. This chain is Acetyl-coenzyme A carboxylase carboxyl transferase subunit alpha, found in Porphyra purpurea (Red seaweed).